The sequence spans 1622 residues: ABC transporter C family member 1 (1622 aa).

A run of 9 helical transmembrane segments spans residues 37 to 57 (FVLG…LWLI), 73 to 93 (FSYF…FRLV), 110 to 130 (EAFM…MTVV), 145 to 165 (FAVI…LSVK), 174 to 194 (YLYI…FVYF), 336 to 356 (AWIG…GVLC), 440 to 460 (VASI…TVII), 527 to 547 (FILN…FSLL), and 557 to 577 (FTSL…PNII). The ABC transmembrane type-1 1 domain maps to 302–582 (FWWGGFWKIG…LPNIITQMVN (281 aa)). An ABC transporter 1 domain is found at 614 to 838 (ISIRNGYFSW…GPLFQRLMEN (225 aa)). An ATP-binding site is contributed by 649 to 656 (GSTGEGKT). The segment at 852–876 (AEVDQTSVKPVENGNANNLQKDGIE) is disordered. The span at 855–871 (DQTSVKPVENGNANNLQ) shows a compositional bias: polar residues. 6 helical membrane-spanning segments follow: residues 909-929 (ALGG…TQVF), 951-971 (PLFY…VTLI), 1027-1049 (AVFV…LIGI), 1053-1072 (LSLW…YLYY), 1138-1158 (LGIR…SLAV), and 1172-1192 (STMG…TAVL). Residues 916 to 1200 (VMMLVICYVL…VLRLASLAEN (285 aa)) form the ABC transmembrane type-1 2 domain. The interaction with calmodulin and FKP42/TWD1 stretch occupies residues 1231–1246 (WPSSGSIKFEDVVLRY). An ABC transporter 2 domain is found at 1237–1471 (IKFEDVVLRY…GESSFSKMVQ (235 aa)). 1271–1278 (GRTGAGKS) lines the ATP pocket.

The protein belongs to the ABC transporter superfamily. ABCC family. Conjugate transporter (TC 3.A.1.208) subfamily. In terms of assembly, interacts with calmodulin (CaM), PAS1 and FKBP42/TWD1. Ubiquitous, with higher levels in leaves and stems and lower levels in roots. Localized in the root apex, root hair tips and root epidermis.

The protein resides in the vacuole membrane. It catalyses the reaction ATP + H2O + xenobioticSide 1 = ADP + phosphate + xenobioticSide 2.. In terms of biological role, pump for glutathione S-conjugates. Mediates the transport of S-(2,4-dinitrophenyl)-glutathione (DNP-GS), GSSG, cyanidin 3-glucoside-GS (C3G-GS) and metolachlor-GS (MOC-GS). The protein is ABC transporter C family member 1 (ABCC1) of Arabidopsis thaliana (Mouse-ear cress).